Consider the following 198-residue polypeptide: Holliday junction branch migration complex subunit RuvA (198 aa).

A domain I region spans residues M1–H63. A domain II region spans residues T64–K142. The interval A143–K147 is flexible linker. The domain III stretch occupies residues A148–G198.

It belongs to the RuvA family. Homotetramer. Forms an RuvA(8)-RuvB(12)-Holliday junction (HJ) complex. HJ DNA is sandwiched between 2 RuvA tetramers; dsDNA enters through RuvA and exits via RuvB. An RuvB hexamer assembles on each DNA strand where it exits the tetramer. Each RuvB hexamer is contacted by two RuvA subunits (via domain III) on 2 adjacent RuvB subunits; this complex drives branch migration. In the full resolvosome a probable DNA-RuvA(4)-RuvB(12)-RuvC(2) complex forms which resolves the HJ.

It is found in the cytoplasm. In terms of biological role, the RuvA-RuvB-RuvC complex processes Holliday junction (HJ) DNA during genetic recombination and DNA repair, while the RuvA-RuvB complex plays an important role in the rescue of blocked DNA replication forks via replication fork reversal (RFR). RuvA specifically binds to HJ cruciform DNA, conferring on it an open structure. The RuvB hexamer acts as an ATP-dependent pump, pulling dsDNA into and through the RuvAB complex. HJ branch migration allows RuvC to scan DNA until it finds its consensus sequence, where it cleaves and resolves the cruciform DNA. The protein is Holliday junction branch migration complex subunit RuvA of Streptococcus pyogenes serotype M6 (strain ATCC BAA-946 / MGAS10394).